A 383-amino-acid polypeptide reads, in one-letter code: Neuropeptide Y receptor type 1 (383 aa).

Residues 1-44 (MNSTSFSQVENHSIYYNFSEKNSRFLAFENDDCHLPLAMIFTLA) are Extracellular-facing. Residues Asn-2, Asn-11, and Asn-17 are each glycosylated (N-linked (GlcNAc...) asparagine). A helical transmembrane segment spans residues 45-65 (LAYGAVIILGVSGNLALIIII). At 66 to 76 (LKQKEMRNVTN) the chain is on the cytoplasmic side. Residues 77–97 (ILIVNLSFSDLLVAIMCLPFT) traverse the membrane as a helical segment. Over 98–116 (FVYTLMDHWVFGEAMCKLN) the chain is Extracellular. Cys-113 and Cys-198 are joined by a disulfide. The helical transmembrane segment at 117–137 (PFVQCVSITVSIFSLVLIAVE) threads the bilayer. Residues 138–154 (RHQLIINPRGWRPNNRH) lie on the Cytoplasmic side of the membrane. Residues 155-175 (AYVGIAVIWVLAVASSLPFLI) traverse the membrane as a helical segment. The Extracellular segment spans residues 176–211 (YQVLTDEPFQNVTLDAFKDKYVCFDKFPSDSHRLSY). A glycan (N-linked (GlcNAc...) asparagine) is linked at Asn-186. A helical transmembrane segment spans residues 212 to 232 (TTLLLVLQYFGPLCFIFICYF). Topologically, residues 233-260 (KIYVRLKRRNSMMDKMRDNKYRSSEAKR) are cytoplasmic. The chain crosses the membrane as a helical span at residues 261–281 (INIMLLSIVVAFAVCWLPLTI). Over 282 to 299 (FNTVFDWDHQIIATCNHN) the chain is Extracellular. The helical transmembrane segment at 300–320 (LLFLLCHLTAMISTCVNPIFY) threads the bilayer. Over 321–383 (GFLNKNFQRD…KIHTDDNEKI (63 aa)) the chain is Cytoplasmic. Cys-338 is lipidated: S-palmitoyl cysteine. Ser-368 bears the Phosphoserine mark.

Belongs to the G-protein coupled receptor 1 family.

The protein localises to the cell membrane. Its function is as follows. Receptor for neuropeptide Y and peptide YY. The sequence is that of Neuropeptide Y receptor type 1 (NPY1R) from Bos taurus (Bovine).